The primary structure comprises 416 residues: UDP-N-acetylglucosamine 1-carboxyvinyltransferase (416 aa).

Phosphoenolpyruvate is bound at residue 22–23 (KN). R91 contacts UDP-N-acetyl-alpha-D-glucosamine. Catalysis depends on C115, which acts as the Proton donor. C115 carries the 2-(S-cysteinyl)pyruvic acid O-phosphothioketal modification. UDP-N-acetyl-alpha-D-glucosamine is bound by residues 120 to 124 (RPIDL), D305, and I327.

It belongs to the EPSP synthase family. MurA subfamily.

It is found in the cytoplasm. It carries out the reaction phosphoenolpyruvate + UDP-N-acetyl-alpha-D-glucosamine = UDP-N-acetyl-3-O-(1-carboxyvinyl)-alpha-D-glucosamine + phosphate. It functions in the pathway cell wall biogenesis; peptidoglycan biosynthesis. Cell wall formation. Adds enolpyruvyl to UDP-N-acetylglucosamine. The polypeptide is UDP-N-acetylglucosamine 1-carboxyvinyltransferase (Buchnera aphidicola subsp. Acyrthosiphon pisum (strain 5A)).